The chain runs to 89 residues: Signal recognition particle 19 kDa protein (89 aa).

Belongs to the SRP19 family. Part of the signal recognition particle protein translocation system, which is composed of SRP and FtsY. Archaeal SRP consists of a 7S RNA molecule of 300 nucleotides and two protein subunits: SRP54 and SRP19.

The protein localises to the cytoplasm. In terms of biological role, involved in targeting and insertion of nascent membrane proteins into the cytoplasmic membrane. Binds directly to 7S RNA and mediates binding of the 54 kDa subunit of the SRP. The polypeptide is Signal recognition particle 19 kDa protein (Methanococcus maripaludis (strain C7 / ATCC BAA-1331)).